The chain runs to 656 residues: Receptor-type tyrosine-protein phosphatase R (656 aa).

The signal sequence occupies residues 1–23; that stretch reads MRRAVGFPALCLLLNLHAAGCFS. Ser23 carries an O-linked (Xyl...) (chondroitin sulfate) serine glycan. Over 25-225 the chain is Extracellular; sequence NNDHFLAIRQ…HEADKIWSKE (201 aa). Asn128 carries N-linked (GlcNAc...) asparagine glycosylation. Residues 226 to 248 traverse the membrane as a helical segment; it reads GFYAVVIFLSIFIIIVTCLMIIY. Residues 249-656 lie on the Cytoplasmic side of the membrane; the sequence is RLKERLQLSF…ESRLSPETVQ (408 aa). Ser271 is modified (phosphoserine). A Phosphoserine; by PKA modification is found at Ser338. Residues 392-646 enclose the Tyrosine-protein phosphatase domain; the sequence is LQSEFMEIPM…EFVHHALCLF (255 aa). Residues Asp553, 587–593, and Gln631 contribute to the substrate site; that span reads CSAGIGR. Cys587 serves as the catalytic Phosphocysteine intermediate.

This sequence belongs to the protein-tyrosine phosphatase family. Receptor class 7 subfamily. As to quaternary structure, interacts with MAPKs. In terms of tissue distribution, widely expressed in the brain, most abundant in cerebellum, midbrain, cerebral cortex and hippocampus. Also expressed in heart and skeletal muscle.

Its subcellular location is the cytoplasm. The protein localises to the cell membrane. The enzyme catalyses O-phospho-L-tyrosyl-[protein] + H2O = L-tyrosyl-[protein] + phosphate. Its function is as follows. Sequesters mitogen-activated protein kinases (MAPKs) such as MAPK1, MAPK3 and MAPK14 in the cytoplasm in an inactive form. The MAPKs bind to a dephosphorylated kinase interacting motif, phosphorylation of which by the protein kinase A complex releases the MAPKs for activation and translocation into the nucleus. The polypeptide is Receptor-type tyrosine-protein phosphatase R (Ptprr) (Rattus norvegicus (Rat)).